Reading from the N-terminus, the 513-residue chain is Bifunctional purine biosynthesis protein PurH (513 aa).

The 144-residue stretch at 1-144 (MKRALISVSD…KNYQDVTVVT (144 aa)) folds into the MGS-like domain.

The protein belongs to the PurH family.

It catalyses the reaction (6R)-10-formyltetrahydrofolate + 5-amino-1-(5-phospho-beta-D-ribosyl)imidazole-4-carboxamide = 5-formamido-1-(5-phospho-D-ribosyl)imidazole-4-carboxamide + (6S)-5,6,7,8-tetrahydrofolate. The enzyme catalyses IMP + H2O = 5-formamido-1-(5-phospho-D-ribosyl)imidazole-4-carboxamide. Its pathway is purine metabolism; IMP biosynthesis via de novo pathway; 5-formamido-1-(5-phospho-D-ribosyl)imidazole-4-carboxamide from 5-amino-1-(5-phospho-D-ribosyl)imidazole-4-carboxamide (10-formyl THF route): step 1/1. The protein operates within purine metabolism; IMP biosynthesis via de novo pathway; IMP from 5-formamido-1-(5-phospho-D-ribosyl)imidazole-4-carboxamide: step 1/1. This Lactobacillus acidophilus (strain ATCC 700396 / NCK56 / N2 / NCFM) protein is Bifunctional purine biosynthesis protein PurH.